A 232-amino-acid polypeptide reads, in one-letter code: Orotidine 5'-phosphate decarboxylase (232 aa).

Substrate-binding positions include aspartate 14, lysine 36, 63–72 (DLKFHDIPNT), threonine 122, arginine 183, glutamine 192, glycine 212, and arginine 213. Lysine 65 serves as the catalytic Proton donor.

The protein belongs to the OMP decarboxylase family. Type 1 subfamily. Homodimer.

It carries out the reaction orotidine 5'-phosphate + H(+) = UMP + CO2. Its pathway is pyrimidine metabolism; UMP biosynthesis via de novo pathway; UMP from orotate: step 2/2. Functionally, catalyzes the decarboxylation of orotidine 5'-monophosphate (OMP) to uridine 5'-monophosphate (UMP). The protein is Orotidine 5'-phosphate decarboxylase of Psychrobacter arcticus (strain DSM 17307 / VKM B-2377 / 273-4).